The primary structure comprises 782 residues: Coiled-coil alpha-helical rod protein 1 (782 aa).

Composition is skewed to basic and acidic residues over residues 62 to 74 and 208 to 218; these read ERDVSSDRQEPGR and ETRRAGEAKEL. Disordered regions lie at residues 62-82 and 177-218; these read ERDVSSDRQEPGRRGRSWGLE and EQLS…AKEL. 3 coiled-coil regions span residues 82 to 314, 344 to 437, and 498 to 691; these read EGSQ…ELTR, LMVQ…NAVS, and VADV…QQEG.

It localises to the cytoplasm. Its subcellular location is the nucleus. Its function is as follows. May be a regulator of keratinocyte proliferation or differentiation. This chain is Coiled-coil alpha-helical rod protein 1 (CCHCR1), found in Pan troglodytes (Chimpanzee).